Reading from the N-terminus, the 254-residue chain is Alcohol dehydrogenase (254 aa).

Residue 10–33 (FVAGLGGIGLDTSREIVKSGPKNL) coordinates NAD(+). Serine 138 contributes to the substrate binding site. The active-site Proton acceptor is tyrosine 151.

This sequence belongs to the short-chain dehydrogenases/reductases (SDR) family. As to quaternary structure, homodimer.

It catalyses the reaction a primary alcohol + NAD(+) = an aldehyde + NADH + H(+). The enzyme catalyses a secondary alcohol + NAD(+) = a ketone + NADH + H(+). This is Alcohol dehydrogenase (Adh) from Drosophila heteroneura (Fruit fly).